Consider the following 479-residue polypeptide: Aspartyl/glutamyl-tRNA(Asn/Gln) amidotransferase subunit B (479 aa).

It belongs to the GatB/GatE family. GatB subfamily. Heterotrimer of A, B and C subunits.

It carries out the reaction L-glutamyl-tRNA(Gln) + L-glutamine + ATP + H2O = L-glutaminyl-tRNA(Gln) + L-glutamate + ADP + phosphate + H(+). The enzyme catalyses L-aspartyl-tRNA(Asn) + L-glutamine + ATP + H2O = L-asparaginyl-tRNA(Asn) + L-glutamate + ADP + phosphate + 2 H(+). Its function is as follows. Allows the formation of correctly charged Asn-tRNA(Asn) or Gln-tRNA(Gln) through the transamidation of misacylated Asp-tRNA(Asn) or Glu-tRNA(Gln) in organisms which lack either or both of asparaginyl-tRNA or glutaminyl-tRNA synthetases. The reaction takes place in the presence of glutamine and ATP through an activated phospho-Asp-tRNA(Asn) or phospho-Glu-tRNA(Gln). The protein is Aspartyl/glutamyl-tRNA(Asn/Gln) amidotransferase subunit B of Streptococcus suis (strain 98HAH33).